The primary structure comprises 218 residues: Large ribosomal subunit protein mL54 (218 aa).

It belongs to the mitochondrion-specific ribosomal protein mL54 family. As to quaternary structure, component of the mitochondrial large ribosomal subunit (mt-LSU). Mature N.crassa 74S mitochondrial ribosomes consist of a small (37S) and a large (54S) subunit. The 37S small subunit contains a 16S ribosomal RNA (16S mt-rRNA) and 32 different proteins. The 54S large subunit contains a 23S rRNA (23S mt-rRNA) and 42 different proteins.

It localises to the mitochondrion. Functionally, component of the mitochondrial ribosome (mitoribosome), a dedicated translation machinery responsible for the synthesis of mitochondrial genome-encoded proteins, including at least some of the essential transmembrane subunits of the mitochondrial respiratory chain. The mitoribosomes are attached to the mitochondrial inner membrane and translation products are cotranslationally integrated into the membrane. In Neurospora crassa (strain ATCC 24698 / 74-OR23-1A / CBS 708.71 / DSM 1257 / FGSC 987), this protein is Large ribosomal subunit protein mL54 (mrpl37).